Reading from the N-terminus, the 235-residue chain is Ubiquinone/menaquinone biosynthesis C-methyltransferase UbiE (235 aa).

Thr59, Asp84, and Ser123 together coordinate S-adenosyl-L-methionine.

It belongs to the class I-like SAM-binding methyltransferase superfamily. MenG/UbiE family.

It carries out the reaction a 2-demethylmenaquinol + S-adenosyl-L-methionine = a menaquinol + S-adenosyl-L-homocysteine + H(+). The enzyme catalyses a 2-methoxy-6-(all-trans-polyprenyl)benzene-1,4-diol + S-adenosyl-L-methionine = a 5-methoxy-2-methyl-3-(all-trans-polyprenyl)benzene-1,4-diol + S-adenosyl-L-homocysteine + H(+). It participates in quinol/quinone metabolism; menaquinone biosynthesis; menaquinol from 1,4-dihydroxy-2-naphthoate: step 2/2. It functions in the pathway cofactor biosynthesis; ubiquinone biosynthesis. Its function is as follows. Methyltransferase required for the conversion of demethylmenaquinol (DMKH2) to menaquinol (MKH2) and the conversion of 2-polyprenyl-6-methoxy-1,4-benzoquinol (DDMQH2) to 2-polyprenyl-3-methyl-6-methoxy-1,4-benzoquinol (DMQH2). In Campylobacter jejuni subsp. jejuni serotype O:6 (strain 81116 / NCTC 11828), this protein is Ubiquinone/menaquinone biosynthesis C-methyltransferase UbiE.